Here is a 906-residue protein sequence, read N- to C-terminus: DNA mismatch repair protein MutS (906 aa).

Residue 656–663 (GPNMAGKS) participates in ATP binding.

Belongs to the DNA mismatch repair MutS family.

In terms of biological role, this protein is involved in the repair of mismatches in DNA. It is possible that it carries out the mismatch recognition step. This protein has a weak ATPase activity. This Rhodopseudomonas palustris (strain BisA53) protein is DNA mismatch repair protein MutS.